An 89-amino-acid polypeptide reads, in one-letter code: Small ribosomal subunit protein uS19 (89 aa).

It belongs to the universal ribosomal protein uS19 family.

In terms of biological role, protein S19 forms a complex with S13 that binds strongly to the 16S ribosomal RNA. The chain is Small ribosomal subunit protein uS19 from Xylella fastidiosa (strain 9a5c).